We begin with the raw amino-acid sequence, 76 residues long: ATP synthase subunit c (76 aa).

The next 2 membrane-spanning stretches (helical) occupy residues 13-33 (LSVI…GILF) and 55-75 (FIGL…ALII).

This sequence belongs to the ATPase C chain family. F-type ATPases have 2 components, F(1) - the catalytic core - and F(0) - the membrane proton channel. F(1) has five subunits: alpha(3), beta(3), gamma(1), delta(1), epsilon(1). F(0) has three main subunits: a(1), b(2) and c(10-14). The alpha and beta chains form an alternating ring which encloses part of the gamma chain. F(1) is attached to F(0) by a central stalk formed by the gamma and epsilon chains, while a peripheral stalk is formed by the delta and b chains.

It localises to the cell membrane. F(1)F(0) ATP synthase produces ATP from ADP in the presence of a proton or sodium gradient. F-type ATPases consist of two structural domains, F(1) containing the extramembraneous catalytic core and F(0) containing the membrane proton channel, linked together by a central stalk and a peripheral stalk. During catalysis, ATP synthesis in the catalytic domain of F(1) is coupled via a rotary mechanism of the central stalk subunits to proton translocation. Functionally, key component of the F(0) channel; it plays a direct role in translocation across the membrane. A homomeric c-ring of between 10-14 subunits forms the central stalk rotor element with the F(1) delta and epsilon subunits. The polypeptide is ATP synthase subunit c (Bifidobacterium longum subsp. infantis (strain ATCC 15697 / DSM 20088 / JCM 1222 / NCTC 11817 / S12)).